Consider the following 119-residue polypeptide: Large ribosomal subunit protein bL20 (119 aa).

It belongs to the bacterial ribosomal protein bL20 family.

In terms of biological role, binds directly to 23S ribosomal RNA and is necessary for the in vitro assembly process of the 50S ribosomal subunit. It is not involved in the protein synthesizing functions of that subunit. The polypeptide is Large ribosomal subunit protein bL20 (Shewanella woodyi (strain ATCC 51908 / MS32)).